A 301-amino-acid chain; its full sequence is Syntaxin-17 (301 aa).

The residue at position 2 (S2) is an N-acetylserine. At 2–227 (SEDEEKVKLR…KNLQKAAKYK (226 aa)) the chain is on the cytoplasmic side. K41 bears the N6-acetyllysine mark. Positions 49–128 (DKLHEEHINA…QVKNEEALLQ (80 aa)) form a coiled coil. Y156 bears the Phosphotyrosine; by ABL1 mark. The region spanning 161–223 (IPRDQNAAES…EEGTKNLQKA (63 aa)) is the t-SNARE coiled-coil homology domain. The chain crosses the membrane as a helical span at residues 228-248 (LAALPVAGAVIGGVVGGPIGL). Residues 228 to 274 (LAALPVAGAVIGGVVGGPIGLLAGFKVAGIAAALGGGVLGFTGGKLI) form a necessary and sufficient for localization to autophagosome region. At 249–253 (LAGFK) the chain is on the lumenal side. A helical transmembrane segment spans residues 254–274 (VAGIAAALGGGVLGFTGGKLI). The segment at 273–301 (LIQRRKQKMMEKLTSSCPDLPSQSDKKCS) is required for interaction with COPB1, TMED9 and TMED10. Residues 275–301 (QRRKQKMMEKLTSSCPDLPSQSDKKCS) lie on the Cytoplasmic side of the membrane. S288 carries the phosphoserine modification. The Endoplasmic reticulum retention signal motif lies at 298–301 (KKCS).

It belongs to the syntaxin family. In terms of assembly, forms a SNARE complex composed of VAMP8, SNAP29 and STX17 involved in fusion of autophagosome with lysosome. May interact with VAMP7. May interact with VTI1B. Probably interacts with BET1, SCFD1 and SEC22B. Interacts with PTPN2 and ABL1; involved in STX17 phosphorylation. Interacts with COPB1. Interacts with TMED9 and TMED10; the interaction is direct. Interacts with RUBCNL/PACER; promoting targeting of RUBCNL/PACER to autophagosome. Interacts with VAMP8, SNAP29, VPS39 and VPS41; these interactions are increased in the absence of TMEM39A. Interacts with IRGM; promoting STX17 recruitment to autophagosomes. Interacts with ATG8 proteins GABARAP and MAP1LC3B. Interacts with RNF115; this interaction enhances STX17 stability which in turn promotes autophagosome maturation. Interacts with RAB39A (GTP-bound); the interaction promotes autophagosome-lysosome membrane fusion driven by STX17-SNAP29-VAMP8. Interacts with RAB39B; the interaction may promote a different fonction in autophagy as compared with RAB39A. Post-translationally, phosphorylated at Tyr-156 probably by ABL1. Dephosphorylation by PTPN2; regulates exit from the endoplasmic reticulum. Detected in all tissues examined with higher expression in steroidogenic tissues including testis and adrenal gland (at protein level). Highly expressed in liver and testis. Also found in brain, heart, kidney, lung, placenta, skeletal muscle and spleen.

It is found in the endoplasmic reticulum membrane. The protein resides in the smooth endoplasmic reticulum membrane. Its subcellular location is the endoplasmic reticulum-Golgi intermediate compartment membrane. It localises to the cytoplasmic vesicle. The protein localises to the autophagosome membrane. It is found in the COPII-coated vesicle membrane. The protein resides in the cytoplasm. Its subcellular location is the cytosol. It localises to the mitochondrion membrane. The protein localises to the autolysosome membrane. Its function is as follows. SNAREs, soluble N-ethylmaleimide-sensitive factor-attachment protein receptors, are essential proteins for fusion of cellular membranes. SNAREs localized on opposing membranes assemble to form a trans-SNARE complex, an extended, parallel four alpha-helical bundle that drives membrane fusion. STX17 is a SNARE of the autophagosome involved in autophagy through the direct control of autophagosome membrane fusion with the lysosome membrane. May also play a role in the early secretory pathway where it may maintain the architecture of the endoplasmic reticulum-Golgi intermediate compartment/ERGIC and Golgi and/or regulate transport between the endoplasmic reticulum, the ERGIC and the Golgi. The sequence is that of Syntaxin-17 from Rattus norvegicus (Rat).